Here is a 127-residue protein sequence, read N- to C-terminus: uncharacterized protein (127 aa).

Helical transmembrane passes span 1-21, 32-52, 68-88, and 100-120; these read MYII…YILV, TVAA…LYVF, AFFS…IILV, and ILDN…LVFK.

It belongs to the GtrA family.

The protein localises to the cell membrane. This is an uncharacterized protein from Bacillus subtilis (strain 168).